Reading from the N-terminus, the 231-residue chain is 7-cyano-7-deazaguanine synthase (231 aa).

8–18 lines the ATP pocket; the sequence is FSGGQDSTTCL. Cys188, Cys197, Cys200, and Cys203 together coordinate Zn(2+).

It belongs to the QueC family. The cofactor is Zn(2+).

It catalyses the reaction 7-carboxy-7-deazaguanine + NH4(+) + ATP = 7-cyano-7-deazaguanine + ADP + phosphate + H2O + H(+). It functions in the pathway purine metabolism; 7-cyano-7-deazaguanine biosynthesis. Catalyzes the ATP-dependent conversion of 7-carboxy-7-deazaguanine (CDG) to 7-cyano-7-deazaguanine (preQ(0)). The sequence is that of 7-cyano-7-deazaguanine synthase from Escherichia fergusonii (strain ATCC 35469 / DSM 13698 / CCUG 18766 / IAM 14443 / JCM 21226 / LMG 7866 / NBRC 102419 / NCTC 12128 / CDC 0568-73).